The sequence spans 265 residues: Protein HesA, vegetative (265 aa).

It belongs to the HesA/MoeB/ThiF family.

The protein is Protein HesA, vegetative (hesA2) of Trichormus variabilis (strain ATCC 29413 / PCC 7937) (Anabaena variabilis).